The chain runs to 544 residues: Regulator of G-protein signaling 14 (544 aa).

The interval Val19 to Gln59 is disordered. Residues Ser20, Ser42, Ser45, Ser143, Ser199, Ser203, Ser218, and Ser286 each carry the phosphoserine modification. Residues Glu23–Glu58 show a composition bias toward polar residues. Residues Ser67–Leu184 form the RGS domain. The interval Arg191–Pro220 is disordered. The necessary for interaction with RABGEF1 stretch occupies residues Arg297–Val424. RBD domains follow at residues Lys300–Arg371 and Thr373–Leu443. The interval Arg449–Gln493 is disordered. Residue Ser481 is modified to Phosphoserine. The GoLoco domain maps to Ile497–Leu519.

In terms of assembly, interacts with GNAI1, GNAI2 and GNAI3. Interacts with GNAO1. Interacts (via RGS and GoLoco domains) with GNAI1; the interaction occurs in the centrosomes. Interaction with GNAI1 or GNAI3 (via active GTP- or inactive GDP-bound forms) prevents association of RGS14 with centrosomes or nuclear localization. Interacts with RABGEF1; the interactions is GTP-dependent. Interacts with RAP2A; the interactions is GTP-dependent and does not alter its function on G(i) alpha subunits either as GAP or as GDI. Associates with microtubules. Found in a complex with at least BRAF, HRAS, MAP2K1, MAPK3 and RGS14. Interacts with RIC8A (via C-terminus). Interacts (via RBD 1 domain) with HRAS (active GTP-bound form preferentially). Interacts (via RBD domains) with BRAF (via N-terminus); the interaction mediates the formation of a ternary complex with RAF1. Interacts (via RBD domains) with RAF1 (via N-terminus); the interaction mediates the formation of a ternary complex with BRAF. Interacts with KRAS (active GTP-bound form preferentially), MRAS (active GTP-bound form preferentially), NRAS (active GTP-bound form preferentially) and RRAS (active GTP-bound form preferentially). In terms of processing, phosphorylated by PKC. Phosphorylation is increased in presence of forskolin and may enhance the GDI activity on G(i) alpha subunit GNAI1. Expressed in neurons of the V2 secondary visual cortex area (at protein level). Expressed at high levels in the brain cortex, hippocampus, striatum, thalamus and substantia nigra, in the lung, and spleen. Low expression has been found in heart, liver, skeletal muscle and testis.

Its subcellular location is the nucleus. It localises to the PML body. The protein resides in the cytoplasm. It is found in the membrane. The protein localises to the cell membrane. Its subcellular location is the cytoskeleton. It localises to the microtubule organizing center. The protein resides in the centrosome. It is found in the spindle. The protein localises to the spindle pole. Its subcellular location is the cell projection. It localises to the dendrite. The protein resides in the dendritic spine. It is found in the postsynaptic density. Functionally, regulates G protein-coupled receptor signaling cascades. Inhibits signal transduction by increasing the GTPase activity of G protein alpha subunits, thereby driving them into their inactive GDP-bound form. Besides, modulates signal transduction via G protein alpha subunits by functioning as a GDP-dissociation inhibitor (GDI). Has GDI activity on G(i) alpha subunits GNAI1 and GNAI3, but not on GNAI2 and G(o)-alpha subunit GNAO1. Has GAP activity on GNAI0, GNAI2 and GNAI3. May act as a scaffold integrating G protein and Ras/Raf MAPkinase signaling pathways. Inhibits platelet-derived growth factor (PDGF)-stimulated ERK1/ERK2 phosphorylation; a process depending on its interaction with HRAS and that is reversed by G(i) alpha subunit GNAI1. Acts as a positive modulator of microtubule polymerisation and spindle organization through a G(i)-alpha-dependent mechanism. Plays a role in cell division; required for completion of the first mitotic division of the embryo. Involved in visual memory processing capacity; when overexpressed in the V2 secondary visual cortex area. Involved in hippocampal-based learning and memory; acts as a suppressor of synaptic plasticity in CA2 neurons. Required for the nerve growth factor (NGF)-mediated neurite outgrowth. Involved in stress resistance. This Rattus norvegicus (Rat) protein is Regulator of G-protein signaling 14 (Rgs14).